The primary structure comprises 509 residues: Photosystem II CP47 reaction center protein (509 aa).

6 consecutive transmembrane segments (helical) span residues 21-36, 101-115, 140-156, 203-218, 237-252, and 457-472; these read AVHLMHTALVAGWAGS, IVLSGMLFLAAIWHW, GIHLLLSSLLCFGFGAF, IAAGTVGILAGVFHLT, VLSSSISAVFFSAFVT, and NFALIFFFGHLWHGSR.

The protein belongs to the PsbB/PsbC family. PsbB subfamily. As to quaternary structure, PSII is composed of 1 copy each of membrane proteins PsbA, PsbB, PsbC, PsbD, PsbE, PsbF, PsbH, PsbI, PsbJ, PsbK, PsbL, PsbM, PsbT, PsbX, PsbY, PsbZ, Psb30/Ycf12, at least 3 peripheral proteins of the oxygen-evolving complex and a large number of cofactors. It forms dimeric complexes. Requires Binds multiple chlorophylls. PSII binds additional chlorophylls, carotenoids and specific lipids. as cofactor.

It is found in the plastid. It localises to the chloroplast thylakoid membrane. In terms of biological role, one of the components of the core complex of photosystem II (PSII). It binds chlorophyll and helps catalyze the primary light-induced photochemical processes of PSII. PSII is a light-driven water:plastoquinone oxidoreductase, using light energy to abstract electrons from H(2)O, generating O(2) and a proton gradient subsequently used for ATP formation. This chain is Photosystem II CP47 reaction center protein, found in Pyropia yezoensis (Susabi-nori).